Consider the following 722-residue polypeptide: Disintegrin and metalloproteinase domain-containing protein 21 (722 aa).

Positions 1 to 31 (MAVDGTLVYIRVTLLLLWLGVFLSISGYCQA) are cleaved as a signal peptide. A propeptide spanning residues 32–196 (GPSQHFTSPE…FEEAENSALE (165 aa)) is cleaved from the precursor. Residue N164 is glycosylated (N-linked (GlcNAc...) asparagine). Positions 171–178 (MRCGLTEK) match the Cysteine switch motif. Residue C173 coordinates Zn(2+). Residues 197–681 (PKSAGDWWTH…DSGPASAKRG (485 aa)) lie on the Extracellular side of the membrane. The Peptidase M12B domain occupies 208 to 398 (WFLELVVVVN…NQGSCLHNPP (191 aa)). N227 carries an N-linked (GlcNAc...) asparagine glycan. Disulfide bonds link C316-C393, C356-C378, and C358-C363. H341 lines the Zn(2+) pocket. E342 is a catalytic residue. Positions 345 and 351 each coordinate Zn(2+). N-linked (GlcNAc...) asparagine glycosylation is found at N377, N437, N478, N546, and N600. In terms of domain architecture, Disintegrin spans 406 to 492 (LKRCGNGVVE…QCPEDRYVQD (87 aa)). An intrachain disulfide couples C464 to C484. Cystine bridges form between C634–C645, C639–C651, and C653–C662. The region spanning 634–663 (CLPETCNMKGICNNKHHCHCGYGWSPPYCQ) is the EGF-like domain. The helical transmembrane segment at 682–702 (VFLPLIVIPSLSVLTFLFTVG) threads the bilayer. Residues 703-722 (LLMYLRQCSGPKETKAHSSG) lie on the Cytoplasmic side of the membrane.

Zn(2+) serves as cofactor. In terms of processing, has no obvious cleavage site for furin endopeptidase, suggesting that the proteolytic processing is regulated.

Its subcellular location is the membrane. In terms of biological role, may be involved in sperm maturation and/or fertilization. May also be involved in epithelia functions associated with establishing and maintaining gradients of ions or nutrients. The polypeptide is Disintegrin and metalloproteinase domain-containing protein 21 (ADAM21) (Homo sapiens (Human)).